Reading from the N-terminus, the 119-residue chain is Large ribosomal subunit protein uL22c (119 aa).

The protein belongs to the universal ribosomal protein uL22 family. As to quaternary structure, part of the 50S ribosomal subunit.

The protein resides in the plastid. The protein localises to the chloroplast. This protein binds specifically to 23S rRNA. Its function is as follows. The globular domain of the protein is located near the polypeptide exit tunnel on the outside of the subunit, while an extended beta-hairpin is found that lines the wall of the exit tunnel in the center of the 70S ribosome. The sequence is that of Large ribosomal subunit protein uL22c (rpl22) from Angiopteris evecta (Mule's foot fern).